A 378-amino-acid polypeptide reads, in one-letter code: Phosphoglycerate kinase (378 aa).

Positions 1, 2, 3, 4, 16, 17, 40, 41, 43, 44, 99, 100, 147, and 148 each coordinate (2R)-3-phosphoglycerate. ADP is bound at residue Gly-191. A CDP-binding site is contributed by Gly-191. AMP contacts are provided by Ala-192 and Lys-193. Ala-192 is an ATP binding site. Ala-192 lines the Mg(2+) pocket. Residue Asp-196 participates in CDP binding. Asp-196 is a binding site for Mg(2+). Lys-197 contacts AMP. ATP is bound at residue Lys-197. An ADP-binding site is contributed by Gly-215. Gly-215 serves as a coordination point for CDP. The AMP site is built by Gly-216 and Gly-288. 2 residues coordinate ATP: Gly-216 and Gly-288. The CDP site is built by Gly-313 and Phe-318. Phe-318 is a binding site for ADP. Glu-319 contacts AMP. The ATP site is built by Glu-319, Asp-351, and Thr-352. Residue Asp-351 coordinates Mg(2+).

The protein belongs to the phosphoglycerate kinase family. In terms of assembly, monomer. Requires Mg(2+) as cofactor.

The enzyme catalyses (2R)-3-phosphoglycerate + ATP = (2R)-3-phospho-glyceroyl phosphate + ADP. Its pathway is carbohydrate degradation; glycolysis; pyruvate from D-glyceraldehyde 3-phosphate: step 2/5. This Condylostoma magnum protein is Phosphoglycerate kinase (PGK).